The following is a 388-amino-acid chain: Protein TsgA homolog (388 aa).

Transmembrane regions (helical) follow at residues 11-31 (WISFLSYAFTGALVVVTGMIM), 50-70 (TFLNAGILVSIFINSWLIEII), 77-97 (IFSFILTIIAVIGIVLCNSIF), 101-121 (INMFILGLVSGITMSIGTFII), 133-153 (LLLLTDSFFSMSGMIFPIVTA), 160-180 (IIWYWSYICIGAIYLLIFLLT), 206-226 (VFLLSISALLYILGQLGFISW), 244-264 (SLVSGFWMSYMLGMWFFSFII), 268-288 (NLYRMFIFLTSMSTILMYCFI), 298-318 (YIIISLGFFSSAIYTIIITLA), 332-352 (LILLFGTIGTFLTFIITSPIV), and 360-380 (TLISSNILYGIVFFLSILIYF).

This sequence belongs to the major facilitator superfamily. TsgA family.

The protein resides in the cell membrane. The protein is Protein TsgA homolog of Buchnera aphidicola subsp. Acyrthosiphon pisum (strain 5A).